The primary structure comprises 371 residues: Probable endolytic peptidoglycan transglycosylase RlpA (371 aa).

Positions 1–25 (MNQRHLWTIVALSVTVLGTPAVGRT) are cleaved as a signal peptide. A compositionally biased stretch (low complexity) spans 177 to 191 (LVASQSQNKSSSSQQ). The segment at 177 to 196 (LVASQSQNKSSSSQQKSERY) is disordered.

It belongs to the RlpA family.

In terms of biological role, lytic transglycosylase with a strong preference for naked glycan strands that lack stem peptides. In Nostoc sp. (strain PCC 7120 / SAG 25.82 / UTEX 2576), this protein is Probable endolytic peptidoglycan transglycosylase RlpA.